Reading from the N-terminus, the 84-residue chain is Small ribosomal subunit protein bS20 (84 aa).

The protein belongs to the bacterial ribosomal protein bS20 family.

Binds directly to 16S ribosomal RNA. The protein is Small ribosomal subunit protein bS20 of Limosilactobacillus reuteri (strain DSM 20016) (Lactobacillus reuteri).